The chain runs to 78 residues: Large ribosomal subunit protein bL28 (78 aa).

The segment at 1-20 is disordered; the sequence is MSRVCQVTGKGPVTGNNISH.

The protein belongs to the bacterial ribosomal protein bL28 family.

This is Large ribosomal subunit protein bL28 from Pseudomonas putida (strain W619).